Consider the following 341-residue polypeptide: tRNA N6-adenosine threonylcarbamoyltransferase (341 aa).

The Fe cation site is built by His-112 and His-116. Substrate is bound by residues 134–138 (LASGG), Asp-167, Gly-180, and Asn-279. Position 307 (Asp-307) interacts with Fe cation.

Belongs to the KAE1 / TsaD family. Requires Fe(2+) as cofactor.

Its subcellular location is the cytoplasm. It carries out the reaction L-threonylcarbamoyladenylate + adenosine(37) in tRNA = N(6)-L-threonylcarbamoyladenosine(37) in tRNA + AMP + H(+). Its function is as follows. Required for the formation of a threonylcarbamoyl group on adenosine at position 37 (t(6)A37) in tRNAs that read codons beginning with adenine. Is involved in the transfer of the threonylcarbamoyl moiety of threonylcarbamoyl-AMP (TC-AMP) to the N6 group of A37, together with TsaE and TsaB. TsaD likely plays a direct catalytic role in this reaction. The chain is tRNA N6-adenosine threonylcarbamoyltransferase from Rickettsia bellii (strain OSU 85-389).